Consider the following 274-residue polypeptide: tRNA pseudouridine synthase A (274 aa).

Residue Asp52 is the Nucleophile of the active site. Tyr110 contributes to the substrate binding site.

Belongs to the tRNA pseudouridine synthase TruA family. Homodimer.

It carries out the reaction uridine(38/39/40) in tRNA = pseudouridine(38/39/40) in tRNA. Formation of pseudouridine at positions 38, 39 and 40 in the anticodon stem and loop of transfer RNAs. The polypeptide is tRNA pseudouridine synthase A (Ralstonia nicotianae (strain ATCC BAA-1114 / GMI1000) (Ralstonia solanacearum)).